The sequence spans 120 residues: MAKYRAGRINEEVKKEVSNIIHNDIKDPRLSAMVSVTDVNVTKDLKYAKVYVSIFGNEKAKEESLEALKSSVGFIRKEVGRRVKLRNTPEVIIEVDNSIERGMHIDELLHSIKENESNDN.

The protein belongs to the RbfA family. In terms of assembly, monomer. Binds 30S ribosomal subunits, but not 50S ribosomal subunits or 70S ribosomes.

It localises to the cytoplasm. One of several proteins that assist in the late maturation steps of the functional core of the 30S ribosomal subunit. Associates with free 30S ribosomal subunits (but not with 30S subunits that are part of 70S ribosomes or polysomes). Required for efficient processing of 16S rRNA. May interact with the 5'-terminal helix region of 16S rRNA. In Clostridium botulinum (strain ATCC 19397 / Type A), this protein is Ribosome-binding factor A.